The following is a 152-amino-acid chain: Cell division protein SepF (152 aa).

A disordered region spans residues 25–54 (EEREPVQEEKGTKDKAAFQERPQTGKQNVV). The span at 28–42 (EPVQEEKGTKDKAAF) shows a compositional bias: basic and acidic residues.

Belongs to the SepF family. In terms of assembly, homodimer. Interacts with FtsZ.

The protein resides in the cytoplasm. Functionally, cell division protein that is part of the divisome complex and is recruited early to the Z-ring. Probably stimulates Z-ring formation, perhaps through the cross-linking of FtsZ protofilaments. Its function overlaps with FtsA. In Bacillus pumilus (strain SAFR-032), this protein is Cell division protein SepF.